The sequence spans 82 residues: RNA-binding protein Hfq (82 aa).

The 61-residue stretch at Asp-11–Ile-71 folds into the Sm domain.

It belongs to the Hfq family. As to quaternary structure, homohexamer.

In terms of biological role, RNA chaperone that binds small regulatory RNA (sRNAs) and mRNAs to facilitate mRNA translational regulation in response to envelope stress, environmental stress and changes in metabolite concentrations. Also binds with high specificity to tRNAs. The chain is RNA-binding protein Hfq from Bradyrhizobium diazoefficiens (strain JCM 10833 / BCRC 13528 / IAM 13628 / NBRC 14792 / USDA 110).